Here is a 435-residue protein sequence, read N- to C-terminus: MAFIDKCKIVLIAGNGGDGIVSWRRETHVPEGGPAGGNGGNGGSIWFVGNHNETSLEFLKYKKIIRAKHGEKGDIKNQHGANAEDVFINVPLGTVVYNPITNEILADINIDQQKYLVAQGGLGGHGNTHFKSPFNKAPNLYELGELGENVEVLLELKTIADIGIIGLPNAGKSTLISTFTNAKPKTANYMFTTLNPVLGTIYRDQNRIIFADIPGLIEGAHTGVGLGHDFLKHIERCFLLIHLISLDPNDNPDIINAYETIVNELKQYKQNLVNKPIVLVANKIDQIGALENLQILKEYLKNNQEIKIISALTNLHVDNMLDDVIKIYFAQKKIYEQRLKEQLPVDQILKWTSDIPKSKELDKTIEIIKVDDHIFEVFGEYLKYWAHRIPLKTQDNLIRFNQKLQSINFNQQLLQAGAVAGDSIKIYDITLEFEE.

The region spanning 1–159 is the Obg domain; it reads MAFIDKCKIV…VEVLLELKTI (159 aa). The 170-residue stretch at 160-329 folds into the OBG-type G domain; that stretch reads ADIGIIGLPN…MLDDVIKIYF (170 aa). Residues 166–173, 191–195, 212–215, 282–285, and 310–312 each bind GTP; these read GLPNAGKS, FTTLN, DIPG, NKID, and SAL. Residues serine 173 and threonine 193 each coordinate Mg(2+). One can recognise an OCT domain in the interval 357 to 435; the sequence is KSKELDKTIE…IYDITLEFEE (79 aa).

It belongs to the TRAFAC class OBG-HflX-like GTPase superfamily. OBG GTPase family. In terms of assembly, monomer. Requires Mg(2+) as cofactor.

Its subcellular location is the cytoplasm. Functionally, an essential GTPase which binds GTP, GDP and possibly (p)ppGpp with moderate affinity, with high nucleotide exchange rates and a fairly low GTP hydrolysis rate. Plays a role in control of the cell cycle, stress response, ribosome biogenesis and in those bacteria that undergo differentiation, in morphogenesis control. The sequence is that of GTPase Obg from Ureaplasma parvum serovar 3 (strain ATCC 27815 / 27 / NCTC 11736).